Reading from the N-terminus, the 215-residue chain is Ribonuclease (215 aa).

The signal sequence occupies residues 1–22 (MKKIVVLLGMLLAPWFSSAVQA). Residues histidine 62, glutamate 102, and histidine 106 contribute to the active site. Positions 144–166 (KPLPAQGGSGQCQRLAGPGQHHG) are disordered.

It belongs to the RNase T2 family.

Its subcellular location is the periplasm. The protein resides in the cytoplasm. Functionally, one of the few RNases that cleave the phosphodiester bond between any two nucleotide. Shows a preference for adenylic acid. The polypeptide is Ribonuclease (Aeromonas hydrophila).